A 190-amino-acid polypeptide reads, in one-letter code: UPF0149 protein NT01EI_3357 (190 aa).

This sequence belongs to the UPF0149 family.

This is UPF0149 protein NT01EI_3357 from Edwardsiella ictaluri (strain 93-146).